The sequence spans 913 residues: Clumping factor B (913 aa).

The signal sequence occupies residues 1-44 (MKKRIDYLSNKQNKYSIRRFTVGTTSVIVGATILFGIGNHQAQA). A YSIRK-G/S signaling motif motif is present at residues 15 to 26 (YSIRRFTVGTTS). 2 stretches are compositionally biased toward polar residues: residues 44–61 (ASEQ…NASA) and 68–95 (MIET…NVDS). Residues 44 to 192 (ASEQSNDTTQ…QGTSKPSVRT (149 aa)) are disordered. A ligand binding A region region spans residues 45 to 542 (SEQSNDTTQS…GSADGDSAVN (498 aa)). Positions 96–119 (TTKPMSTQTSNTTTTEPASTNETP) are enriched in low complexity. Residues 120 to 189 (QPTAIKNQAT…SNAQGTSKPS (70 aa)) are compositionally biased toward polar residues. The MIDAS-like motif motif lies at 272–276 (DYSNS). Residues 530-885 (YGGGSADGDS…ETGDKSENTN (356 aa)) form a disordered region. Positions 545–555 (DPTPGPPVDPE) are enriched in pro residues. Over residues 556 to 837 (PSPDPEPEPT…SDSDSDSDSD (282 aa)) the composition is skewed to acidic residues. Positions 841–852 (RVTPPNNEQKAP) are enriched in polar residues. Positions 869 to 882 (HKTDALPETGDKSE) are enriched in basic and acidic residues. Residues 874–878 (LPETG) carry the LPXTG sorting signal motif. Pentaglycyl murein peptidoglycan amidated threonine is present on Thr877. A propeptide spans 878-913 (GDKSENTNATLFGAMMALLGSLLLFRKRKQDHKEKA) (removed by sortase).

This sequence belongs to the serine-aspartate repeat-containing protein (SDr) family. Post-translationally, proteolytically cleaved by aureolysin (aur). This cleavage leads to the inactivation of ClfB.

The protein resides in the secreted. It localises to the cell wall. In terms of biological role, cell surface-associated protein implicated in virulence by promoting bacterial attachment to both alpha- and beta-chains of human fibrinogen and inducing the formation of bacterial clumps. This Staphylococcus aureus (strain COL) protein is Clumping factor B (clfB).